Consider the following 310-residue polypeptide: MIGAGPVGLFAAHFAHLHGLSSLIFDSLSEVGGQPQMLYPFKKISDIPAYNSINGTALIQNLKSGLPKETEIITNHKVNDIKKNADGFVLDNVVLAKSIIIATGAGAFKPKELPLKMRDEIQKRVHYFIKDPKDFANQKIGVFGGGNSALDLAIELANYANVKIIHRRNEFRGLELNVKKLRSLTNVEILTPYLPKDIQLINNQLDITLKGMGDVQSRHEQFDQIVVAYGFKADNRFIKNWGIELNGTNIAVDPTMKTNIDGIYAAGDVVSYPGRVPLIALGFGEAQIAITSIMRDLFPEKTLTIHSTSI.

The FAD site is built by Asp26, Gln34, Tyr39, Val78, Phe108, Asp268, and Thr308.

It belongs to the ferredoxin--NADP reductase type 2 family. As to quaternary structure, homodimer. The cofactor is FAD.

The catalysed reaction is 2 reduced [2Fe-2S]-[ferredoxin] + NADP(+) + H(+) = 2 oxidized [2Fe-2S]-[ferredoxin] + NADPH. The chain is Ferredoxin--NADP reductase from Lactobacillus helveticus (strain DPC 4571).